The chain runs to 340 residues: Glycerol-3-phosphate dehydrogenase [NAD(P)+] (340 aa).

Tryptophan 11, arginine 33, and lysine 110 together coordinate NADPH. Residues lysine 110, glycine 144, and serine 146 each contribute to the sn-glycerol 3-phosphate site. Alanine 148 is an NADPH binding site. 5 residues coordinate sn-glycerol 3-phosphate: lysine 199, aspartate 252, serine 262, arginine 263, and asparagine 264. The active-site Proton acceptor is lysine 199. Residue arginine 263 coordinates NADPH. NADPH contacts are provided by valine 287 and glutamate 289.

The protein belongs to the NAD-dependent glycerol-3-phosphate dehydrogenase family.

The protein localises to the cytoplasm. It catalyses the reaction sn-glycerol 3-phosphate + NAD(+) = dihydroxyacetone phosphate + NADH + H(+). It carries out the reaction sn-glycerol 3-phosphate + NADP(+) = dihydroxyacetone phosphate + NADPH + H(+). The protein operates within membrane lipid metabolism; glycerophospholipid metabolism. In terms of biological role, catalyzes the reduction of the glycolytic intermediate dihydroxyacetone phosphate (DHAP) to sn-glycerol 3-phosphate (G3P), the key precursor for phospholipid synthesis. The chain is Glycerol-3-phosphate dehydrogenase [NAD(P)+] from Polynucleobacter asymbioticus (strain DSM 18221 / CIP 109841 / QLW-P1DMWA-1) (Polynucleobacter necessarius subsp. asymbioticus).